Consider the following 265-residue polypeptide: Protein Exd1 homolog (265 aa).

Positions 32 to 82 constitute a 3'-5' exonuclease domain; that stretch reads EKQLDRIVLIYQVDTTYHSALKDIKDQKIISLLVEPSFYGRHHPTSILVVA.

This sequence belongs to the EXD1 family. In terms of assembly, homodimer.

RNA-binding protein. Inactive exonuclease. This is Protein Exd1 homolog from Drosophila melanogaster (Fruit fly).